Consider the following 130-residue polypeptide: Small ribosomal subunit protein uS8 (130 aa).

It belongs to the universal ribosomal protein uS8 family. In terms of assembly, part of the 30S ribosomal subunit.

Functionally, one of the primary rRNA binding proteins, it binds directly to 16S rRNA central domain where it helps coordinate assembly of the platform of the 30S subunit. The protein is Small ribosomal subunit protein uS8 of Methanococcus maripaludis (strain C7 / ATCC BAA-1331).